We begin with the raw amino-acid sequence, 588 residues long: Adenylate kinase 5, chloroplastic (588 aa).

Residues 1–34 (MASLSLSSAHFSSTSSSSRSSISTSSLSPSSTSL) are disordered. The N-terminal 73 residues, 1 to 73 (MASLSLSSAH…SFSTSNSQIR (73 aa)), are a transit peptide targeting the chloroplast. Position 89–94 (89–94 (ASGKGT)) interacts with ATP. The interval 109-138 (STGDLLRAEVSSGTDIGKRAKEFMNSGSLV) is NMP. AMP is bound by residues R115, 136–138 (SLV), 165–168 (GFPR), and Q172. Positions 202-235 (GRRLDPVTGKIYHIKNYPPESDEIKARLVTRPDD) are LID. An ATP-binding site is contributed by R203. The AMP site is built by R232 and R243.

This sequence belongs to the adenylate kinase family. As to quaternary structure, monomer.

The protein resides in the plastid. Its subcellular location is the chloroplast. It carries out the reaction AMP + ATP = 2 ADP. In terms of biological role, catalyzes the reversible transfer of the terminal phosphate group between ATP and AMP. This chain is Adenylate kinase 5, chloroplastic, found in Arabidopsis thaliana (Mouse-ear cress).